The sequence spans 150 residues: CCAAT/enhancer-binding protein gamma (150 aa).

Lysine 3 participates in a covalent cross-link: Glycyl lysine isopeptide (Lys-Gly) (interchain with G-Cter in SUMO2). Positions glycine 27–valine 94 are disordered. Over residues leucine 28–alanine 37 the composition is skewed to low complexity. The segment covering serine 56–asparagine 72 has biased composition (basic and acidic residues). The bZIP domain maps to serine 62–histidine 125. The tract at residues arginine 66–arginine 93 is basic motif. The segment at leucine 97–leucine 118 is leucine-zipper. The segment at leucine 129–glutamine 150 is disordered. Residues glutamine 134–glutamine 150 are compositionally biased toward polar residues.

Belongs to the bZIP family. C/EBP subfamily. As to quaternary structure, binds DNA as a dimer and can form stable heterodimers with CEBPA. Can form stable heterodimers with CEBPB. Interacts with ZNF638; this interaction increases transcriptional activation. Ubiquitous.

It localises to the nucleus. Its function is as follows. Transcription factor that binds to the promoter and the enhancer regions of target genes. Binds to the promoter and the enhancer of the immunoglobulin heavy chain. Binds to GPE1, a cis-acting element in the G-CSF gene promoter. Binds to the enhancer element PRE-I (positive regulatory element-I) of the IL-4 gene. Binds to the promoter and the enhancer of the alpha-1-fetoprotein gene. This chain is CCAAT/enhancer-binding protein gamma (Cebpg), found in Mus musculus (Mouse).